A 371-amino-acid chain; its full sequence is GPI mannosyltransferase 1 (371 aa).

8 helical membrane-spanning segments follow: residues 64–84 (FPSW…WLMI), 120–140 (AILG…SVWL), 144–164 (ILGF…AFLV), 190–210 (IVVG…YLYG), 248–268 (ASSL…PLVF), 290–310 (VCTS…LPNS), 318–338 (LICL…AYNL), and 344–364 (SVFI…VYEL).

Belongs to the PIGM family.

The protein resides in the endoplasmic reticulum membrane. The protein operates within glycolipid biosynthesis; glycosylphosphatidylinositol-anchor biosynthesis. Its function is as follows. Mannosyltransferase involved in glycosylphosphatidylinositol-anchor biosynthesis. Transfers the first alpha-1,4-mannose to GlcN-acyl-PI during GPI precursor assembly. Required for cell wall integrity. The chain is GPI mannosyltransferase 1 (gpi14) from Schizosaccharomyces pombe (strain 972 / ATCC 24843) (Fission yeast).